The sequence spans 147 residues: Large ribosomal subunit protein uL15 (147 aa).

Basic and acidic residues predominate over residues 1 to 15; the sequence is MKLHELKPAKGAVKE. Positions 1–47 are disordered; the sequence is MKLHELKPAKGAVKEVKRKGRGRATGNGKTAGRGHNGQNSRSGGGVR. Over residues 23 to 35 the composition is skewed to gly residues; sequence RATGNGKTAGRGH.

Belongs to the universal ribosomal protein uL15 family. As to quaternary structure, part of the 50S ribosomal subunit.

Functionally, binds to the 23S rRNA. The polypeptide is Large ribosomal subunit protein uL15 (Alkaliphilus metalliredigens (strain QYMF)).